The sequence spans 160 residues: uncharacterized protein (160 aa).

A helical membrane pass occupies residues 47–67 (LLGGFANVAAILTPLVAVLAY).

The protein localises to the membrane. This is an uncharacterized protein from Sinorhizobium fredii (strain NBRC 101917 / NGR234).